A 73-amino-acid polypeptide reads, in one-letter code: SIFamide-related peptide (73 aa).

The first 23 residues, 1–23 (MVSIRLTFALAIVAIIFAFSVDA), serve as a signal peptide directing secretion. F35 is modified (phenylalanine amide). The propeptide occupies 39 to 73 (SNTMTDYEFTSRALSAICEVASETCTAWMSRQESN).

Expressed in brain, the retrocerebral complex and in ventral, thoracic and abdominal ganglia (at protein level).

The protein localises to the secreted. The chain is SIFamide-related peptide from Camponotus floridanus (Florida carpenter ant).